The following is a 1083-amino-acid chain: Regulator of the glycerol channel 1 (1083 aa).

2 disordered regions span residues 1 to 46 and 69 to 89; these read MSDY…GSSD and LKNEPASGNTQMNGPDGKENK. The segment covering 13–31 has biased composition (polar residues); sequence GGISKQPATPGSTRSSSRN. A phosphoserine mark is found at Ser136, Ser249, Ser252, Ser481, and Ser537. One can recognise a PH domain in the interval 495–606; the sequence is CIRVGYLLKK…DCSLKDSTDS (112 aa). The tract at residues 534–582 is disordered; it reads DSKSPRSKNKPVVEQSDISRVNKDGTNAGSHPSSKGTQDPKLTKRRKGL. Over residues 549–570 the composition is skewed to polar residues; the sequence is SDISRVNKDGTNAGSHPSSKGT. A phosphoserine mark is found at Ser652, Ser765, and Ser813. Residues Thr817 and Thr857 each carry the phosphothreonine modification. Ser866, Ser879, Ser918, Ser966, Ser969, and Ser975 each carry phosphoserine. The segment at 979-1083 is disordered; sequence EENRTQNCSG…TVPATSASSK (105 aa). 3 stretches are compositionally biased toward polar residues: residues 983 to 992, 1043 to 1061, and 1071 to 1083; these read TQNCSGSRKS, LKKTYSAENVPLTSTVSND, and STNTVPATSASSK. Residues Ser1059, Ser1081, and Ser1082 each carry the phosphoserine modification.

The protein belongs to the RGC1 family.

It localises to the cytoplasm. Its function is as follows. Positive regulator of FPS1 glycerol channel required for the glycerol efflux. This Saccharomyces cerevisiae (strain ATCC 204508 / S288c) (Baker's yeast) protein is Regulator of the glycerol channel 1 (RGC1).